Here is an 883-residue protein sequence, read N- to C-terminus: Aldehyde-alcohol dehydrogenase (883 aa).

Residues 13–456 are aldehyde dehydrogenase; the sequence is KLVAEKHVDE…DNVSAINLLN (444 aa). NAD(+)-binding positions include 121 to 126, G206, and G224; that span reads ITPTTN. C257 functions as the Nucleophile in the catalytic mechanism. NAD(+)-binding positions include E355, L435, and 438-443; that span reads GSYGRN. A linker region spans residues 457-464; that stretch reads IKKVGRRR. NAD(+) is bound by residues D500, D534, 561–565, 612–613, V625, K634, and L653; these read GSPMD and TT. D668, H672, H736, and H750 together coordinate Fe cation.

In the N-terminal section; belongs to the aldehyde dehydrogenase family. This sequence in the C-terminal section; belongs to the iron-containing alcohol dehydrogenase family. It depends on Fe(2+) as a cofactor.

It catalyses the reaction an aldehyde + NAD(+) + H2O = a carboxylate + NADH + 2 H(+). It carries out the reaction ethanol + NAD(+) = acetaldehyde + NADH + H(+). Has alcohol dehydrogenase activity. Has aldehyde dehydrogenase activity. Plays a role in enhancing virulence in mice, under ethanol stress conditions, perhaps by inducing expression of pneumolysin (Ply) and increasing production of hydrogen peroxide H(2)O(2). May be considered a potential virulence factor. In Streptococcus pneumoniae serotype 2 (strain D39 / NCTC 7466), this protein is Aldehyde-alcohol dehydrogenase.